The chain runs to 291 residues: tRNA dimethylallyltransferase (291 aa).

9–16 (GTTASGKS) is a binding site for ATP. 11-16 (TASGKS) provides a ligand contact to substrate. The interval 34–37 (DSLA) is interaction with substrate tRNA.

This sequence belongs to the IPP transferase family. As to quaternary structure, monomer. It depends on Mg(2+) as a cofactor.

It catalyses the reaction adenosine(37) in tRNA + dimethylallyl diphosphate = N(6)-dimethylallyladenosine(37) in tRNA + diphosphate. In terms of biological role, catalyzes the transfer of a dimethylallyl group onto the adenine at position 37 in tRNAs that read codons beginning with uridine, leading to the formation of N6-(dimethylallyl)adenosine (i(6)A). The polypeptide is tRNA dimethylallyltransferase (Campylobacter concisus (strain 13826)).